A 132-amino-acid chain; its full sequence is Neurophysin 2 (132 aa).

7 disulfides stabilise this stretch: C10-C54, C13-C27, C21-C44, C28-C34, C61-C73, C67-C85, and C74-C79.

The protein belongs to the vasopressin/oxytocin family.

Its subcellular location is the secreted. In terms of biological role, neurophysin 2 specifically binds vasopressin. This Struthio camelus (Common ostrich) protein is Neurophysin 2.